The sequence spans 198 residues: Small ribosomal subunit protein uS4 (198 aa).

The S4 RNA-binding domain occupies 91-154; the sequence is SRLDNVVYRL…KNLNIVQEAV (64 aa).

Belongs to the universal ribosomal protein uS4 family. Part of the 30S ribosomal subunit. Contacts protein S5. The interaction surface between S4 and S5 is involved in control of translational fidelity.

Its function is as follows. One of the primary rRNA binding proteins, it binds directly to 16S rRNA where it nucleates assembly of the body of the 30S subunit. With S5 and S12 plays an important role in translational accuracy. The polypeptide is Small ribosomal subunit protein uS4 (Onion yellows phytoplasma (strain OY-M)).